The chain runs to 210 residues: Orotate phosphoribosyltransferase (210 aa).

Residues R97, K98, and 125–133 contribute to the 5-phospho-alpha-D-ribose 1-diphosphate site; that span reads NDMVSSGKS. S129 and R157 together coordinate orotate.

Belongs to the purine/pyrimidine phosphoribosyltransferase family. PyrE subfamily. In terms of assembly, homodimer. Mg(2+) serves as cofactor.

It carries out the reaction orotidine 5'-phosphate + diphosphate = orotate + 5-phospho-alpha-D-ribose 1-diphosphate. The protein operates within pyrimidine metabolism; UMP biosynthesis via de novo pathway; UMP from orotate: step 1/2. Functionally, catalyzes the transfer of a ribosyl phosphate group from 5-phosphoribose 1-diphosphate to orotate, leading to the formation of orotidine monophosphate (OMP). The sequence is that of Orotate phosphoribosyltransferase from Chlamydia pneumoniae (Chlamydophila pneumoniae).